The sequence spans 451 residues: Proton-coupled amino acid transporter-like protein acs (451 aa).

Over 1–48 (MNDDIKTVTVYPTTLELTTPTKSANGSNDDYDPHQHRELKNPTTNFQT) the chain is Cytoplasmic. The chain crosses the membrane as a helical span at residues 49–69 (FAHFLKASVGTGVLAMPSAFA). Residues 70–80 (HAGYVNGTLLT) lie on the Extracellular side of the membrane. N-linked (GlcNAc...) asparagine glycosylation occurs at Asn-75. A helical transmembrane segment spans residues 81–101 (LIIGSLALYCLHILIKCMYIL). Residues 102-136 (CKRQRVPYVSFSQAMNLGLKQGPPWLRCLAPIAVP) are Cytoplasmic-facing. A helical membrane pass occupies residues 137–157 (FVDGFLAFYHFGICCVYVVFI). The Extracellular segment spans residues 158 to 167 (AESIKQLVDE). A helical transmembrane segment spans residues 168–188 (YLVVWDVRIHMCIIIVPLLLI). Topologically, residues 189-199 (YSIKNLKLLAP) are cytoplasmic. The helical transmembrane segment at 200–220 (FSSAANLLLLVGFGIILYYIF) threads the bilayer. The Extracellular segment spans residues 221 to 237 (EELPPLSERDPFVAAGK). A helical membrane pass occupies residues 238–258 (LPTFFGTVLFALEAVGVILAI). At 259-272 (EENMATPKSFVGPC) the chain is on the cytoplasmic side. The helical transmembrane segment at 273–293 (GILNSGMSIVLGLYVLLGFFG) threads the bilayer. The Extracellular portion of the chain corresponds to 294 to 320 (YWKYGNESEGSITLNIPQSEIPAQVVK). Asn-299 carries an N-linked (GlcNAc...) asparagine glycan. A helical membrane pass occupies residues 321–341 (VFFAITTWISYALQGYVTAHI). The Cytoplasmic portion of the chain corresponds to 342-357 (LWDKYLAKRFKETRQT). A helical membrane pass occupies residues 358–378 (FYELIFRAIIVLLTFGCAVAI). At 379 to 382 (PDLS) the chain is on the extracellular side. The helical transmembrane segment at 383 to 403 (VFLSLVGSFCLSILGLIFPVL) threads the bilayer. The Cytoplasmic portion of the chain corresponds to 404–420 (LQICVQYTEGYGPFRIK). Residues 421–441 (LIINLLLLCFGIFGGVVGTYV) form a helical membrane-spanning segment. Residues 442–451 (SILDIIAVYK) are Extracellular-facing.

Belongs to the amino acid/polyamine transporter 2 family. As to expression, expressed in the proximal and distal regions of the midgut; expressed in enterocytes and progenitor cells. Expression increases in response to intestinal bacterial infection and spreads further into the midgut, eventually covering the entire midgut.

The protein localises to the cell membrane. It localises to the late endosome membrane. It is found in the lysosome membrane. The protein resides in the basal cell membrane. Its function is as follows. Amino acid transporter which has pH-dependent electrogenic transport activity for alanine, glycine and proline. Plays a role in positive regulation of growth by directly or indirectly modulating the effects of the TOR signaling pathway. Required in enterocytes for the efficient recovery of gut epithelium following the cytoplasmic purge response to bacterial infection. Acts cell-autonomously to promote the retrograde transport of amino acids into the intestinal epithelium. Acts non-cell-autonomously through the insulin signaling pathway to stimulate Myc expression and the release of amino acids from nutrient stores into the hemolymph. The polypeptide is Proton-coupled amino acid transporter-like protein acs (Drosophila melanogaster (Fruit fly)).